The following is a 292-amino-acid chain: Tissue factor (292 aa).

An N-terminal signal peptide occupies residues 1–35; it reads MATPNGPRVPCPQAAVARALLFGLVLIQGAGVAGT. Residues 36–248 lie on the Extracellular side of the membrane; that stretch reads TDVVVAYNIT…TSHEKVLSTE (213 aa). N-linked (GlcNAc...) asparagine glycosylation occurs at N43. A WKS motif motif is present at residues 46–48; the sequence is WKS. C81 and C89 are oxidised to a cystine. N-linked (GlcNAc...) asparagine glycosylation is found at N153 and N181. C215 and C238 are joined by a disulfide. Residues 249-271 form a helical membrane-spanning segment; sequence LFFIIGTVMLVIIIFIVVLSVSL. Residues 272 to 292 are Cytoplasmic-facing; the sequence is HKCRKVRAERSGKENTPLNAA. C274 carries the S-palmitoyl cysteine lipid modification.

It belongs to the tissue factor family. As to quaternary structure, interacts with HSPE; the interaction, inhibited by heparin, promotes the generation of activated factor X and activates coagulation in the presence of activated factor VII.

It is found in the membrane. Its function is as follows. Initiates blood coagulation by forming a complex with circulating factor VII or VIIa. The [TF:VIIa] complex activates factors IX or X by specific limited proteolysis. TF plays a role in normal hemostasis by initiating the cell-surface assembly and propagation of the coagulation protease cascade. The polypeptide is Tissue factor (F3) (Bos taurus (Bovine)).